The chain runs to 261 residues: Hydroxylase cctR (261 aa).

Residues 38–58 (VFVSLLILSNTISFGLLGWIG) form a helical membrane-spanning segment. N95 carries N-linked (GlcNAc...) asparagine glycosylation. 2 short sequence motifs (HXXHC) span residues 146–150 (HEIHC) and 176–180 (HIAHC).

The protein belongs to the ustYa family.

The protein localises to the membrane. Its pathway is mycotoxin biosynthesis. Hydroxylase; part of the gene cluster that mediates the biosynthesis of the mycotoxin cyclochlorotine, a hepatotoxic and carcinogenic cyclic chlorinated pentapeptide. Within the pathway, cctR performs the last step by hydroxylating cyclochlorotine to yield hydroxycyclochlorotine. The NRPS cctN initially catalyzes the condensation of L-serine (Ser), Pro, L-2-aminobutyrate (2Abu), Ser, and beta-Phe in this order to produce isocyclotine. After the dichlorination of Pro2 catalyzed by cctP2 to produce isocyclochlorotine, the cctO-mediated transacylation of isocyclochlorotine can furnish cyclochlorotine. The subsequent hydroxylation of cyclochlorotine by cctR yields hydroxycyclochlorotine as the final product. CctP1 probably acts as a phenylalanine aminomutase and provides the uncommon building block beta-Phe. Furthermore, 2Abu can be synthesized from threonine by one of the threonine dehydratases and transaminases localized outside of the cluster. The functions of the remaining proteins encoded by the cluster, cctM and cctT, have not been identified yet. The chain is Hydroxylase cctR from Talaromyces islandicus (Penicillium islandicum).